Reading from the N-terminus, the 1029-residue chain is MVFLSIPNGKTLSIDVNPNSTTISAFEQLAHQRSDVPQSFLRYSLRMRNPSRVFVDSKDSDSILLSDLGVSRFSTVIIHVLLLGGMQAAPPKPRLDFLNSKPPSNYVAGLGRGATGFTTRSDIGPARAAPDLPDRSALATAAAPGVGRGAGKPSEAEAEDDEEAEEKRYDENQTFDEFEGNDVGLFANAEYDEDDKEADAIWESIDQRMDSRRKDRREAKLKEEIEKYRASNPKITEQFADLKRKLHTLSADEWDSIPEIGDYSLRNKKKKFESFVPIPDTLLEKAKKEKELVMALDPKSRAAGGSETPWGQTPVTDLTAVGEGRGTVLSLKLDNLSDSVSGQTVVDPKGYLTDLKSMKRTTDEEIYDRNRARLLYKSLTQSNPKNPNGWIAAARVEEVDGKIKAARFQIQRGCEECPKNEDVWLEACRLANPEDAKGVIAKGVKLIPNSVKLWLEAAKLEHDVENKSRVLRKGLEHIPDSVRLWKAVVELANEEDARILLHRAVECCPLHLELWVALARLETYAESKKVLNKAREKLPKEPAIWITAAKLEEANGKLDEANDNTAMVGKIIDRGIKTLQREGVVIDRENWMSEAEACERVGSVATCQAIIKNTIGIGVEEEDRKRTWVADADECKKRGSIETARAIYAHALSVFLTKKSIWLKAAQLEKSHGSRESLDALLRKAVTYVPQAEVLWLMGAKEKWLAGDVPAARAILQEAYAAIPNSEEIWLAAFKLEFENKEPERARMLLAKARERGGTERVWMKSAIVERELGNVEEERRLLNEGLKQFPTFFKLWLMLGQLEERFKHLEQARKAYDTGLKHCPHCIPLWLSLADLEEKVNGLNKARAILTTARKKNPGGAELWLAAIRAELRHDNKREAEHLMSKALQDCPKSGILWAADIEMAPRPRRKTKSIDAMKKCDRDPHVTIAVAKLFWQDKKVEKARAWFERAVTVGPDIGDFWALFYKFELQHGSDEDRKEVVAKCVACEPKHGEKWQAISKAVENAHQPIEVILKRVVNALSKEENSA.

The Ubiquitin-like domain maps to 1 to 85 (MVFLSIPNGK…VIIHVLLLGG (85 aa)). A Glycyl lysine isopeptide (Gly-Lys) (interchain with K-? in acceptor proteins) cross-link involves residue Gly85. The interval 142–170 (AAPGVGRGAGKPSEAEAEDDEEAEEKRYD) is disordered. Residues 210–243 (DSRRKDRREAKLKEEIEKYRASNPKITEQFADLK) are a coiled coil. HAT repeat units lie at residues 367 to 399 (YDRN…VEEV), 401 to 431 (GKIK…CRLA), 432 to 462 (NPED…KLEH), 463 to 494 (DVEN…LANE), 496 to 524 (DARI…LETY), 526 to 554 (ESKK…LEEA), 639 to 671 (GSIE…LEKS), 673 to 705 (GSRE…EKWL), 707 to 739 (GDVP…LEFE), 741 to 772 (KEPE…VERE), 774 to 806 (GNVE…LEER), 808 to 840 (KHLE…LEEK), 842 to 874 (NGLN…AELR), 876 to 908 (DNKR…MAPR), and 940 to 972 (KKVE…FELQ). The TPR 1 repeat unit spans residues 625 to 658 (KRTWVADADECKKRGSIETARAIYAHALSVFLTK). One copy of the TPR 2 repeat lies at 794-827 (FKLWLMLGQLEERFKHLEQARKAYDTGLKHCPHC). One copy of the TPR 3 repeat lies at 926–959 (PHVTIAVAKLFWQDKKVEKARAWFERAVTVGPDI).

Component of a pre-mRNA splicing complex. Interacts with ZOP1. Interacts with PRP31. As to expression, ubiquitous.

It is found in the nucleus. It localises to the cajal body. Functionally, pre-mRNA splicing factor required for splicing and for the turnover of unstable transcripts. May be a U5 snRNP-associated protein involved in the formation of U4/U6-U5 tri-snRNP. Involved in responses to abiotic stresses. Involved in microRNAs (miRNAs) biogenesis by functioning in primary miRNAs (pri-miRNAs) splicing. Required for DNA methylation and transcriptional silencing through the RNA-directed DNA methylation (RdDM) pathway. This chain is Protein STABILIZED1 (STA1), found in Arabidopsis thaliana (Mouse-ear cress).